A 487-amino-acid chain; its full sequence is N-succinylglutamate 5-semialdehyde dehydrogenase (487 aa).

221–226 lines the NAD(+) pocket; sequence GSSDTG. Catalysis depends on residues glutamate 244 and cysteine 278.

This sequence belongs to the aldehyde dehydrogenase family. AstD subfamily.

The enzyme catalyses N-succinyl-L-glutamate 5-semialdehyde + NAD(+) + H2O = N-succinyl-L-glutamate + NADH + 2 H(+). It participates in amino-acid degradation; L-arginine degradation via AST pathway; L-glutamate and succinate from L-arginine: step 4/5. In terms of biological role, catalyzes the NAD-dependent reduction of succinylglutamate semialdehyde into succinylglutamate. The protein is N-succinylglutamate 5-semialdehyde dehydrogenase of Burkholderia vietnamiensis (strain G4 / LMG 22486) (Burkholderia cepacia (strain R1808)).